A 440-amino-acid polypeptide reads, in one-letter code: Adenosylhomocysteinase (440 aa).

3 residues coordinate substrate: Thr47, Asp123, and Glu148. 149-151 (TTT) contributes to the NAD(+) binding site. Residues Lys178 and Asp182 each contribute to the substrate site. NAD(+) is bound by residues Asn183, 228 to 233 (GFGDVG), Glu251, 307 to 309 (IGH), and Asn354.

The protein belongs to the adenosylhomocysteinase family. NAD(+) is required as a cofactor.

It carries out the reaction S-adenosyl-L-homocysteine + H2O = L-homocysteine + adenosine. It participates in amino-acid biosynthesis; L-homocysteine biosynthesis; L-homocysteine from S-adenosyl-L-homocysteine: step 1/1. Its function is as follows. Adenosylhomocysteine is a competitive inhibitor of S-adenosyl-L-methionine-dependent methyl transferase reactions; therefore adenosylhomocysteinase may play a key role in the control of methylations via regulation of the intracellular concentration of adenosylhomocysteine. This Pneumocystis carinii protein is Adenosylhomocysteinase (SAHH).